Consider the following 458-residue polypeptide: Na(+)/H(+) antiporter NhaA (458 aa).

12 helical membrane passes run 27 to 47 (FLHV…AALI), 78 to 98 (LHFW…GMEI), 114 to 134 (ILPI…YLSF), 143 to 163 (GWAV…ALLG), 172 to 192 (VILL…IAFF), 201 to 221 (GLAI…IGLA), 222 to 242 (SAWL…ITGV), 249 to 269 (VILG…PLTI), 316 to 336 (PWVA…VSFA), 346 to 366 (FLVV…GIIT), 388 to 408 (ILLI…VSML), and 421 to 441 (IGVL…GLIY).

It belongs to the NhaA Na(+)/H(+) (TC 2.A.33) antiporter family.

Its subcellular location is the cell inner membrane. It carries out the reaction Na(+)(in) + 2 H(+)(out) = Na(+)(out) + 2 H(+)(in). Its function is as follows. Na(+)/H(+) antiporter that extrudes sodium in exchange for external protons. The chain is Na(+)/H(+) antiporter NhaA from Bartonella quintana (strain Toulouse) (Rochalimaea quintana).